Reading from the N-terminus, the 181-residue chain is Adenine phosphoribosyltransferase (181 aa).

Belongs to the purine/pyrimidine phosphoribosyltransferase family. In terms of assembly, homodimer.

The protein resides in the cytoplasm. The catalysed reaction is AMP + diphosphate = 5-phospho-alpha-D-ribose 1-diphosphate + adenine. Its pathway is purine metabolism; AMP biosynthesis via salvage pathway; AMP from adenine: step 1/1. Functionally, catalyzes a salvage reaction resulting in the formation of AMP, that is energically less costly than de novo synthesis. In Rhizobium leguminosarum bv. trifolii (strain WSM2304), this protein is Adenine phosphoribosyltransferase.